The sequence spans 335 residues: MGQHGAIRLQNEVQEGMPPPHELTEEEQWAEEHRKMHEKHKGHEAMHMEMMVIFMISVIVGQIFLVTWKRKHFKSYQMCTLIGMLTIPVYVCFNRSWYRFLATWLVFCIFSAFIWLKASAQHISGGTPRFVYKWFLFLHKLSYVLGVVGYLIMMGALLGFHVLFGVSQPTLMDAGILFMFYGVYYGVLGRDFAHICTARMASRIGYYTPEGLPKKHLEDGVCAVCGGRLDDSEHVHDADAVVTTKMVEDEDEKLYKLSCGHVFHEFCIRGWVVVGKLQTCPYCKERVDLQRMFKNPWEKPHLFYGKLLDWIRYLVCWQPLIVTAVQGLTTWMGLE.

The Cytoplasmic segment spans residues 1–47; it reads MGQHGAIRLQNEVQEGMPPPHELTEEEQWAEEHRKMHEKHKGHEAMH. The chain crosses the membrane as a helical span at residues 48 to 68; that stretch reads MEMMVIFMISVIVGQIFLVTW. The Lumenal segment spans residues 69–72; that stretch reads KRKH. Residues 73-93 traverse the membrane as a helical segment; that stretch reads FKSYQMCTLIGMLTIPVYVCF. Topologically, residues 94-99 are cytoplasmic; the sequence is NRSWYR. The helical transmembrane segment at 100-120 threads the bilayer; that stretch reads FLATWLVFCIFSAFIWLKASA. Over 121 to 143 the chain is Lumenal; it reads QHISGGTPRFVYKWFLFLHKLSY. A helical transmembrane segment spans residues 144–164; it reads VLGVVGYLIMMGALLGFHVLF. The Cytoplasmic portion of the chain corresponds to 165–168; it reads GVSQ. A helical membrane pass occupies residues 169-189; that stretch reads PTLMDAGILFMFYGVYYGVLG. The Lumenal segment spans residues 190–335; it reads RDFAHICTAR…QGLTTWMGLE (146 aa). The RING-type; atypical zinc finger occupies 222 to 284; that stretch reads CAVCGGRLDD…GKLQTCPYCK (63 aa).

It belongs to the RNF121 family. In terms of tissue distribution, expressed in body wall muscles, the hypodermis, seam cells, vulval cells, spermathecal cells, uterine cells and the distal tip cell (at protein level).

It localises to the endoplasmic reticulum membrane. The protein resides in the golgi apparatus membrane. It catalyses the reaction S-ubiquitinyl-[E2 ubiquitin-conjugating enzyme]-L-cysteine + [acceptor protein]-L-lysine = [E2 ubiquitin-conjugating enzyme]-L-cysteine + N(6)-ubiquitinyl-[acceptor protein]-L-lysine.. It functions in the pathway protein modification; protein ubiquitination. Functionally, E3 ubiquitin ligase which accepts ubiquitin and transfers it to substrates such as the beta-integrin subunit pat-3, promoting their degradation by the endoplasmic reticulum-associated degradation (ERAD) pathway which is a pathway involved in ubiquitin-dependent degradation of misfolded endoplasmic reticulum proteins. Negatively regulates the unfolded protein response to reduce endoplasmic reticulum stress. Required for the cessation of distal tip cell migration at the end of larval morphogenesis. Plays a role in germline and gonad development. This chain is E3 ubiquitin ligase rnf-121, found in Caenorhabditis elegans.